A 378-amino-acid polypeptide reads, in one-letter code: SWI/SNF-related matrix-associated actin-dependent regulator of chromatin subfamily B member 1 (378 aa).

Residues 1 to 106 (MIMALSKTFG…DEKYKAVSIS (106 aa)) form a DNA-binding region.

This sequence belongs to the SNF5 family. As to quaternary structure, component of the multiprotein chromatin-remodeling complexes SWI/SNF. Component of neural progenitors-specific chromatin remodeling complex (npBAF complex) and the neuron-specific chromatin remodeling complex (nBAF complex). Component of the BAF (SWI/SNF) chromatin remodeling complex. Component of the SWI/SNF-B (PBAF) chromatin remodeling complex. Binds to double-stranded DNA.

It localises to the nucleus. Involved in chromatin-remodeling. Core component of the BAF (SWI/SNF) complex. This ATP-dependent chromatin-remodeling complex plays important roles in cell proliferation and differentiation, in cellular antiviral activities and inhibition of tumor formation. Belongs to the neural progenitors-specific chromatin remodeling complex (npBAF complex) and the neuron-specific chromatin remodeling complex (nBAF complex) and may play a role in neural development. In Xenopus tropicalis (Western clawed frog), this protein is SWI/SNF-related matrix-associated actin-dependent regulator of chromatin subfamily B member 1 (smarcb1).